The following is a 318-amino-acid chain: Receptor homology region, transmembrane domain- and RING domain-containing protein 5 (318 aa).

The signal sequence occupies residues 1 to 20; it reads MNYSWITIMSLLVICKLASA. At 22 to 163 the chain is on the lumenal side; that stretch reads VVLIGKNTIL…IPGFGISSWS (142 aa). An intrachain disulfide couples Cys62 to Cys87. Residues 70-143 enclose the PA domain; it reads EKRSKYRSSY…RASGEVLKGY (74 aa). Asn121 carries N-linked (GlcNAc...) asparagine glycosylation. The helical transmembrane segment at 164–184 threads the bilayer; it reads IMGITFISLLAMSAILATCFV. At 185-318 the chain is on the cytoplasmic side; the sequence is VRRHQIRQSV…DLPIVVRVYL (134 aa). The segment at 233–275 adopts an RING-type; atypical zinc-finger fold; it reads CAICIDDYCVGEKLRILPCKHKYHAVCIDSWLGRCRSFCPVCK.

It is found in the prevacuolar compartment membrane. The protein resides in the protein storage vacuole membrane. In terms of biological role, involved in the trafficking of vacuolar proteins. May function as a sorting receptor for protein trafficking to the protein storage vacuole (PSV). The protein is Receptor homology region, transmembrane domain- and RING domain-containing protein 5 (RMR5) of Arabidopsis thaliana (Mouse-ear cress).